A 48-amino-acid chain; its full sequence is DNA-directed RNA polymerase subunit Rpo12 (48 aa).

Residues Cys9, Cys26, and Cys29 each coordinate Zn(2+).

It belongs to the archaeal Rpo12/eukaryotic RPC10 RNA polymerase subunit family. In terms of assembly, part of the RNA polymerase complex. Requires Zn(2+) as cofactor.

It is found in the cytoplasm. It carries out the reaction RNA(n) + a ribonucleoside 5'-triphosphate = RNA(n+1) + diphosphate. DNA-dependent RNA polymerase (RNAP) catalyzes the transcription of DNA into RNA using the four ribonucleoside triphosphates as substrates. The polypeptide is DNA-directed RNA polymerase subunit Rpo12 (Sulfurisphaera tokodaii (strain DSM 16993 / JCM 10545 / NBRC 100140 / 7) (Sulfolobus tokodaii)).